Consider the following 297-residue polypeptide: Phospholipid scramblase 2 (297 aa).

Residues 1-72 are proline-rich domain (PRD); sequence MRSWNSLFCL…NQPGRPEGVP (72 aa). Over 1 to 276 the chain is Cytoplasmic; that stretch reads MRSWNSLFCL…IQFPRDLDVK (276 aa). T149 bears the Phosphothreonine; by PKC mark. 5 S-palmitoyl cysteine lipidation sites follow: C172, C173, C174, C176, and C177. A helical membrane pass occupies residues 277–293; that stretch reads MKAVMIGACFLIDYMFF. Residues 294–297 lie on the Extracellular side of the membrane; sequence ERTR.

Belongs to the phospholipid scramblase family. Requires Ca(2+) as cofactor. In terms of tissue distribution, expression of isoform 1 seems restricted to testis.

The protein resides in the membrane. It localises to the nucleus. It carries out the reaction a 1,2-diacyl-sn-glycero-3-phosphocholine(in) = a 1,2-diacyl-sn-glycero-3-phosphocholine(out). In terms of biological role, may catalyze calcium-induced ATP-independent rapid bidirectional and non-specific movement of phospholipids (lipid scrambling or lipid flip-flop) between the inner and outer leaflet of the plasma membrane. Functionally, has no phospholipid scramblase activity, due to the lack of a N-terminal proline-rich domain. The polypeptide is Phospholipid scramblase 2 (Homo sapiens (Human)).